The chain runs to 232 residues: Protein INAPERTURATE POLLEN 1 homolog (232 aa).

Interacts with LECRKS7/DAF1.

The protein localises to the cytoplasm. In terms of biological role, required for pollen aperture formation, male fertility and LECRKS7/DAF1 function. Seems to be involved in operculum protrusion. Participates in the modification of plasma membrane at future aperture sites, possibly by creating close contact between the plasma membrane and callose wall to prevent primexine formation and sporopollenin deposition. The sequence is that of Protein INAPERTURATE POLLEN 1 homolog from Oryza sativa subsp. japonica (Rice).